Consider the following 407-residue polypeptide: Ribosomal protein uL3-like (407 aa).

Residues 1–31 (MSHRKFSAPRHGHLGFLPHKRSHRHRGKVKT) are compositionally biased toward basic residues. Disordered regions lie at residues 1–35 (MSHR…WPRD) and 387–407 (AFMG…SGDL).

Belongs to the universal ribosomal protein uL3 family. As to quaternary structure, component of the large ribosomal subunit in striated muscle cells.

In terms of biological role, heart- and skeletal muscle-specific component of the ribosome, which regulates muscle function. Component of the large ribosomal subunit in striated muscle cells: replaces the RPL3 paralog in the ribosome in these cells. The ribosome is a large ribonucleoprotein complex responsible for the synthesis of proteins in the cell. Inhibits myotube growth and muscle function. The chain is Ribosomal protein uL3-like from Homo sapiens (Human).